Consider the following 37-residue polypeptide: Large ribosomal subunit protein bL36A (37 aa).

Belongs to the bacterial ribosomal protein bL36 family.

The sequence is that of Large ribosomal subunit protein bL36A from Actinobacillus pleuropneumoniae serotype 3 (strain JL03).